A 284-amino-acid chain; its full sequence is Tropomyosin (284 aa).

Residues 1-284 are a coiled coil; the sequence is MDAIKKKMQA…DQTFQELFGY (284 aa). Residues 113-142 are compositionally biased toward basic and acidic residues; that stretch reads LEKATHTADESDRVRKVMENRSFQDEERAN. The interval 113 to 143 is disordered; the sequence is LEKATHTADESDRVRKVMENRSFQDEERANT.

The protein belongs to the tropomyosin family.

Its function is as follows. Tropomyosin, in association with the troponin complex, plays a central role in the calcium dependent regulation of muscle contraction. This chain is Tropomyosin, found in Acanthocheilonema viteae (Filarial nematode worm).